Consider the following 128-residue polypeptide: Large-conductance mechanosensitive channel (128 aa).

Transmembrane regions (helical) follow at residues 10 to 30 and 76 to 96; these read FAMRGNVVDMAIGVIIGSAFG and GLFIQNVIDFIIIAFAIFMMI.

This sequence belongs to the MscL family. Homopentamer.

It localises to the cell inner membrane. Channel that opens in response to stretch forces in the membrane lipid bilayer. May participate in the regulation of osmotic pressure changes within the cell. The chain is Large-conductance mechanosensitive channel from Haemophilus influenzae (strain 86-028NP).